Here is a 65-residue protein sequence, read N- to C-terminus: MRCLPVFIILLLLIPSAASAAQPETKDDAALASFYDNAKRTLQRHWAKSLCCPEDAWCCSHDEGK.

The signal sequence occupies residues 1-20 (MRCLPVFIILLLLIPSAASA). A propeptide spanning residues 21–48 (AQPETKDDAALASFYDNAKRTLQRHWAK) is cleaved from the precursor. At glutamate 63 the chain carries Glutamic acid 1-amide.

The protein belongs to the conotoxin T superfamily. In terms of processing, contains 2 disulfide bonds that can be either 'C1-C3, C2-C4' or 'C1-C4, C2-C3', since these disulfide connectivities have been observed for conotoxins with cysteine framework V (for examples, see AC P0DQQ7 and AC P81755). As to expression, expressed by the venom duct.

Its subcellular location is the secreted. The chain is Conotoxin TsMRCL-04 from Conus tessulatus (Tessellate cone).